The following is a 100-amino-acid chain: Probable antitoxin MazE1 (100 aa).

Residues 77–100 form a disordered region; that stretch reads PYESEAERSAARARRNARQQRSAQ.

In terms of assembly, forms a complex with cognate toxin MazF1.

Probable antitoxin component of a type II toxin-antitoxin (TA) system. Labile antitoxin that binds to cognate MazF1 toxin and counteracts its endoribonuclease activity. This is Probable antitoxin MazE1 (mazE1) from Mycobacterium bovis (strain ATCC BAA-935 / AF2122/97).